Consider the following 217-residue polypeptide: Protein GrpE (217 aa).

Positions 1–10 (MSDHAEHAAD) are enriched in basic and acidic residues. Residues 1-39 (MSDHAEHAADAADTDAPEGDDAGGDDGEQAGDDGTSALS) are disordered. Positions 12-31 (ADTDAPEGDDAGGDDGEQAG) are enriched in acidic residues.

It belongs to the GrpE family. In terms of assembly, homodimer.

The protein localises to the cytoplasm. Its function is as follows. Participates actively in the response to hyperosmotic and heat shock by preventing the aggregation of stress-denatured proteins, in association with DnaK and GrpE. It is the nucleotide exchange factor for DnaK and may function as a thermosensor. Unfolded proteins bind initially to DnaJ; upon interaction with the DnaJ-bound protein, DnaK hydrolyzes its bound ATP, resulting in the formation of a stable complex. GrpE releases ADP from DnaK; ATP binding to DnaK triggers the release of the substrate protein, thus completing the reaction cycle. Several rounds of ATP-dependent interactions between DnaJ, DnaK and GrpE are required for fully efficient folding. The sequence is that of Protein GrpE from Halobacterium salinarum (strain ATCC 29341 / DSM 671 / R1).